We begin with the raw amino-acid sequence, 291 residues long: MFEGAMPALITPFTKDDRIDREGLRRNIAFVEEGGVSGIVPCGTTGESATLSALEHEEVIDIAVECAKVPVVAGTGSNNTGEALQFTKHAADAGVDGVLLISPYYNKPNPAGLLAHFKKIAEAVDIPMILYNVPSRTGQDMPVDVITKLAKVENIVGIKEASGSVGKVSQILEQTIDDDFVVLSGEDGLTLPIISVGGSGVISVAANIVPDKMSGMVSAALKGDYETARKIHFEIAPLIRALFLETNPIPAKKAAELIGLASGHLRLPLAPMSDANQLKLVTELKKLGVMK.

A pyruvate-binding site is contributed by T45. Residue Y131 is the Proton donor/acceptor of the active site. Catalysis depends on K159, which acts as the Schiff-base intermediate with substrate. Residue I202 participates in pyruvate binding.

This sequence belongs to the DapA family. As to quaternary structure, homotetramer; dimer of dimers.

The protein resides in the cytoplasm. The catalysed reaction is L-aspartate 4-semialdehyde + pyruvate = (2S,4S)-4-hydroxy-2,3,4,5-tetrahydrodipicolinate + H2O + H(+). It functions in the pathway amino-acid biosynthesis; L-lysine biosynthesis via DAP pathway; (S)-tetrahydrodipicolinate from L-aspartate: step 3/4. Its function is as follows. Catalyzes the condensation of (S)-aspartate-beta-semialdehyde [(S)-ASA] and pyruvate to 4-hydroxy-tetrahydrodipicolinate (HTPA). The chain is 4-hydroxy-tetrahydrodipicolinate synthase from Methanosarcina acetivorans (strain ATCC 35395 / DSM 2834 / JCM 12185 / C2A).